Reading from the N-terminus, the 910-residue chain is E3 ubiquitin-protein ligase MARCHF6 (910 aa).

M1 is subject to N-acetylmethionine. Residues 1-62 (MDTAEEDICR…ELCKHRFAFT (62 aa)) form an RING-CH-type zinc finger. Topologically, residues 1 to 91 (MDTAEEDICR…LVTSIGTAIR (91 aa)) are cytoplasmic. The Zn(2+) site is built by C9, C12, C26, C28, H36, C39, C52, and C55. A helical transmembrane segment spans residues 92-112 (YWFHYTLVAFAWLGVVPLTAC). Residues 113 to 142 (RIYKCLFTGSVSSLLTLPLDMLSTENLLAD) are Extracellular-facing. Residues 143–163 (CLQGCFVVTCTLCAFISLVWL) form a helical membrane-spanning segment. The Cytoplasmic portion of the chain corresponds to 164–283 (REQIVHGGAP…WERMLGLDGS (120 aa)). Residues 185-256 (AAGHHQNEAP…AADANNGAQD (72 aa)) form a disordered region. A compositionally biased stretch (acidic residues) spans 223–248 (DAQDDQAEEEEEDNEEEDDAGVEDAA). A helical transmembrane segment spans residues 284–304 (LVFLEHVFWVVSLNTLFILVF). The Extracellular segment spans residues 305–336 (AFCPYHIGHFSLVGLGFEEHVQASHFEGLITT). The chain crosses the membrane as a helical span at residues 337 to 357 (IVGYILLAITLIICHGLATLV). Over 358-376 (KFHRSRRLLGVCYIVVKVS) the chain is Cytoplasmic. The helical transmembrane segment at 377–397 (LLVVVEIGVFPLICGWWLDIC) threads the bilayer. The Extracellular portion of the chain corresponds to 398–421 (SLEMFDATLKDRELSFQSAPGTTM). Residues 422-442 (FLHWLVGMVYVFYFASFILLL) traverse the membrane as a helical segment. Over 443 to 480 (REVLRPGVLWFLRNLNDPDFNPVQEMIHLPIYRHLRRF) the chain is Cytoplasmic. Residues 481 to 501 (ILSVIVFGSIVLLMLWLPIRI) traverse the membrane as a helical segment. Topologically, residues 502 to 519 (IKSVLPNFLPYNVMLYSD) are extracellular. Residues 520–540 (APVSELSLELLLLQVVLPALL) form a helical membrane-spanning segment. Residues 541–632 (EQGHTRQWLK…YRRPLNFPLR (92 aa)) are Cytoplasmic-facing. Residues 633 to 653 (IFLLIVFMCITLLIASLICLT) traverse the membrane as a helical segment. At 654–678 (LPVFAGRWLMSFWTGTAKIHELYTA) the chain is on the extracellular side. A helical transmembrane segment spans residues 679–699 (ACGLYVCWLTIRAVTVMVAWM). The Cytoplasmic portion of the chain corresponds to 700–721 (PQGRRVIFQKVKEWSLMIMKTL). Residues 722–742 (IVAVLLAGVVPLLLGLLFELV) traverse the membrane as a helical segment. At 743 to 764 (IVAPLRVPLDQTPLFYPWQDWA) the chain is on the extracellular side. Residues 765 to 785 (LGVLHAKIIAAITLMGPQWWL) form a helical membrane-spanning segment. Residues 786–815 (KTVIEQVYANGIRNIDLHYIVRKLAAPVIS) are Cytoplasmic-facing. Residues 816 to 836 (VLLLSLCVPYVIASGVVPLLG) form a helical membrane-spanning segment. At 837–848 (VTAEMQNLVHRR) the chain is on the extracellular side. The chain crosses the membrane as a helical span at residues 849–869 (IYPFLLMVVVLMAILSFQVRQ). Residues 870–910 (FKRLYEHIKNDKYLVGQRLVNYERKSGKQGSSPPPPQSSQE) are Cytoplasmic-facing.

In terms of assembly, interacts with DIO2. Interacts with SQLE. In terms of processing, auto-ubiquitinated, which results in proteasomal degradation. Deubiquitinated by USP19; protecting MARCHF6 from p97-mediated proteasomal degradation. In terms of tissue distribution, present in brain (at protein level).

The protein localises to the endoplasmic reticulum membrane. The catalysed reaction is S-ubiquitinyl-[E2 ubiquitin-conjugating enzyme]-L-cysteine + [acceptor protein]-L-lysine = [E2 ubiquitin-conjugating enzyme]-L-cysteine + N(6)-ubiquitinyl-[acceptor protein]-L-lysine.. The protein operates within protein modification; protein ubiquitination. Its function is as follows. Endoplasmic reticulum membrane-associated E3 ubiquitin ligase that plays a critical role in mitigating endoplasmic reticulum stress, the regulation of cholesterol and lipid homeostasis, and ferroptosis. Acts as a pivotal component of both the Ac/N-degron pathway (targeting the N-terminal acetyl group of substrates) and the ER-associated protein degradation-cytosol (ERAD-C) pathway (targeting misfolded substrates). For instance, mediates the degradation of Ac/N-degron-bearing proteins such as the G-protein regulator RGS2 and the lipid droplet protein PLIN2. Suppresses endoplasmic reticulum stress and ferroptosis through cytosolic POMC degradation. Prevents ferroptosis by acting as a NADPH sensor during lipid peroxidation through its C-terminal regulatory region. Facilitates also the degradation of selected endoplasmic reticulum proteins by associating with signal peptide peptidase for the turnover of endogenous tail-anchored proteins. Promotes ubiquitination of DIO2, leading to its degradation. By ubiquitinating and thereby modulating the stability of many proteins of the cholesterol pathway including SQLE, CYP51A1, CYP11A1 and HMGCR, acts as a crucial post-translational regulator of cholesterol synthesis. The sequence is that of E3 ubiquitin-protein ligase MARCHF6 from Homo sapiens (Human).